Consider the following 233-residue polypeptide: Putative N-acetylmuramoyl-L-alanine amidase (233 aa).

The 219-residue stretch at 1-219 folds into the MurNAc-LAA domain; it reads MIDPGHGGQD…IANAIYIALK (219 aa).

This sequence belongs to the N-acetylmuramoyl-L-alanine amidase 3 family.

The protein resides in the secreted. The enzyme catalyses Hydrolyzes the link between N-acetylmuramoyl residues and L-amino acid residues in certain cell-wall glycopeptides.. Cell-wall hydrolase involved in septum cleavage during cell division. The sequence is that of Putative N-acetylmuramoyl-L-alanine amidase (amiB) from Buchnera aphidicola subsp. Schizaphis graminum (strain Sg).